The primary structure comprises 114 residues: Large ribosomal subunit protein uL22 (114 aa).

This sequence belongs to the universal ribosomal protein uL22 family. In terms of assembly, part of the 50S ribosomal subunit.

This protein binds specifically to 23S rRNA; its binding is stimulated by other ribosomal proteins, e.g. L4, L17, and L20. It is important during the early stages of 50S assembly. It makes multiple contacts with different domains of the 23S rRNA in the assembled 50S subunit and ribosome. Its function is as follows. The globular domain of the protein is located near the polypeptide exit tunnel on the outside of the subunit, while an extended beta-hairpin is found that lines the wall of the exit tunnel in the center of the 70S ribosome. The sequence is that of Large ribosomal subunit protein uL22 from Bacillus licheniformis (strain ATCC 14580 / DSM 13 / JCM 2505 / CCUG 7422 / NBRC 12200 / NCIMB 9375 / NCTC 10341 / NRRL NRS-1264 / Gibson 46).